Consider the following 278-residue polypeptide: Large ribosomal subunit protein uL2 (278 aa).

Disordered stretches follow at residues 1–58 (MAIR…GGGH) and 225–278 (VMNP…KNKR). Over residues 37-58 (LHGRGGRNAHGRITTRHKGGGH) the composition is skewed to basic residues. Basic and acidic residues predominate over residues 253–267 (PEGRTRKNKASDKLI). Over residues 268 to 278 (VRRRRTGKNKR) the composition is skewed to basic residues.

This sequence belongs to the universal ribosomal protein uL2 family. As to quaternary structure, part of the 50S ribosomal subunit. Forms a bridge to the 30S subunit in the 70S ribosome.

Its function is as follows. One of the primary rRNA binding proteins. Required for association of the 30S and 50S subunits to form the 70S ribosome, for tRNA binding and peptide bond formation. It has been suggested to have peptidyltransferase activity; this is somewhat controversial. Makes several contacts with the 16S rRNA in the 70S ribosome. The polypeptide is Large ribosomal subunit protein uL2 (Rhodococcus opacus (strain B4)).